We begin with the raw amino-acid sequence, 259 residues long: Troponin T, fast skeletal muscle (259 aa).

A compositionally biased stretch (acidic residues) spans 1-36; the sequence is MSDEETEQVEEQYEEEEEAQEEEVQEEAPEPEEVQE. The segment at 1–62 is disordered; sequence MSDEETEQVE…EKVDFDDIQK (62 aa). At S2 the chain carries N-acetylserine. S2 is modified (phosphoserine). A compositionally biased stretch (basic and acidic residues) spans 50–62; that stretch reads PEGEKVDFDDIQK. S78 bears the Phosphoserine mark. Basic and acidic residues predominate over residues 101–143; that stretch reads RAERAEQQRIRAEKERERQNRLAEEKARREEEDAKRRAEDDLK. Residues 101–180 are disordered; it reads RAERAEQQRI…TAREMKKKIL (80 aa). Residues S149, S156, and S157 each carry the phosphoserine modification. The span at 171-180 shows a compositional bias: basic and acidic residues; it reads TAREMKKKIL. At S193 the chain carries Phosphoserine. Residue Y209 is modified to Phosphotyrosine. Residues 235–259 form a disordered region; that stretch reads RIDQAQKHSKKAGATAKGKVGGRWK.

This sequence belongs to the troponin T family.

Troponin T is the tropomyosin-binding subunit of troponin, the thin filament regulatory complex which confers calcium-sensitivity to striated muscle actomyosin ATPase activity. The polypeptide is Troponin T, fast skeletal muscle (Tnnt3) (Rattus norvegicus (Rat)).